A 553-amino-acid polypeptide reads, in one-letter code: Formate--tetrahydrofolate ligase (553 aa).

63–70 (TPAGEGKS) is an ATP binding site.

This sequence belongs to the formate--tetrahydrofolate ligase family.

It catalyses the reaction (6S)-5,6,7,8-tetrahydrofolate + formate + ATP = (6R)-10-formyltetrahydrofolate + ADP + phosphate. Its pathway is one-carbon metabolism; tetrahydrofolate interconversion. This chain is Formate--tetrahydrofolate ligase, found in Limosilactobacillus fermentum (strain NBRC 3956 / LMG 18251) (Lactobacillus fermentum).